Consider the following 249-residue polypeptide: Phosphate import ATP-binding protein PstB 1 (249 aa).

The ABC transporter domain maps to 4-244; that stretch reads FNIENLDLFY…PKDDRTQGYV (241 aa). Position 36 to 43 (36 to 43) interacts with ATP; sequence GPSGCGKS.

This sequence belongs to the ABC transporter superfamily. Phosphate importer (TC 3.A.1.7) family. As to quaternary structure, the complex is composed of two ATP-binding proteins (PstB), two transmembrane proteins (PstC and PstA) and a solute-binding protein (PstS).

The protein localises to the cell inner membrane. The enzyme catalyses phosphate(out) + ATP + H2O = ADP + 2 phosphate(in) + H(+). Functionally, part of the ABC transporter complex PstSACB involved in phosphate import. Responsible for energy coupling to the transport system. This is Phosphate import ATP-binding protein PstB 1 from Aliivibrio fischeri (strain ATCC 700601 / ES114) (Vibrio fischeri).